Reading from the N-terminus, the 499-residue chain is Maturase K (499 aa).

Belongs to the intron maturase 2 family. MatK subfamily.

It is found in the plastid. The protein localises to the chloroplast. Usually encoded in the trnK tRNA gene intron. Probably assists in splicing its own and other chloroplast group II introns. The sequence is that of Maturase K from Macrozamia communis (Burrawang palm).